The following is a 336-amino-acid chain: Ornithine carbamoyltransferase, catabolic (336 aa).

Residues 57–60, glutamine 84, arginine 108, and 135–138 each bind carbamoyl phosphate; these read STRT and HPTQ. Residues asparagine 169, aspartate 233, and 237-238 contribute to the L-ornithine site; that span reads SM. Residues 275–276 and arginine 322 each bind carbamoyl phosphate; that span reads CL.

This sequence belongs to the aspartate/ornithine carbamoyltransferase superfamily. OTCase family.

Its subcellular location is the cytoplasm. It carries out the reaction carbamoyl phosphate + L-ornithine = L-citrulline + phosphate + H(+). The protein operates within amino-acid degradation; L-arginine degradation via ADI pathway; carbamoyl phosphate from L-arginine: step 2/2. In terms of biological role, reversibly catalyzes the transfer of the carbamoyl group from carbamoyl phosphate (CP) to the N(epsilon) atom of ornithine (ORN) to produce L-citrulline. In Photobacterium profundum (strain SS9), this protein is Ornithine carbamoyltransferase, catabolic.